A 544-amino-acid chain; its full sequence is Rubrofusarin-specific efflux pump aurT (544 aa).

Residues 1 to 12 (MTDNTDMEKLDR) are compositionally biased toward basic and acidic residues. The tract at residues 1–42 (MTDNTDMEKLDRATTPTPIPNEAPPTSEPSESKPEEAEDESK) is disordered. A compositionally biased stretch (pro residues) spans 17 to 27 (TPIPNEAPPTS). The segment covering 30-42 (SESKPEEAEDESK) has biased composition (basic and acidic residues). The next 8 membrane-spanning stretches (helical) occupy residues 45 to 65 (HGLK…LVAL), 89 to 111 (WYAS…IFTF), 116 to 136 (TVYL…GVAP), 146 to 166 (AIAG…ITTV), 177 to 197 (GMMG…GGAF), 205 to 225 (WCFY…ILLF), 246 to 266 (WGNL…QWGG), and 276 to 296 (IVAL…IQIW). Asn-300 carries an N-linked (GlcNAc...) asparagine glycan. Helical transmembrane passes span 318-338 (IFAF…PIWF), 357-377 (VLSL…VGWF), 380-400 (VFFS…TFVV), 407-427 (WIGY…LASL), 444-464 (LMFF…QAVF), and 514-534 (YFYV…GIEW).

This sequence belongs to the major facilitator superfamily. TCR/Tet family.

The protein localises to the cell membrane. It functions in the pathway pigment biosynthesis. Functionally, rubrofusarin-specific efflux pump; part of the gene cluster that mediates the biosynthesis of aurofusarin, a red mycelium pigment which is acting as a mycotoxin. The first step is performed by the polyketide synthase which condenses one acetyl-CoA and 6 malonyl-CoA units to form the first intermediate, the cyclic heptaketide and yellow pigment YWA1. The C2 hydroxyl group in the pyrone ring of YWA1 is probably formed during ring closure by an aldol-type cyclization reaction. The dehydratase aurZ then acts as the first tailoring enzyme in the aurofusarin biosynthetic pathway by converting YWA1 to nor-rubrofusarin. Nor-rubrofusarin is then methylated to rubrofusarin by the O-methyltransferase aurJ. Rubrofusarin is then transported across the plasma membrane by the rubrofusarin-specific pump aurT for further enzymatic processing by the extracellular complex composed of GIP1, aurF, aurO and aurS to yield aurofusarin. In Gibberella zeae (strain ATCC MYA-4620 / CBS 123657 / FGSC 9075 / NRRL 31084 / PH-1) (Wheat head blight fungus), this protein is Rubrofusarin-specific efflux pump aurT.